The chain runs to 226 residues: Large ribosomal subunit protein uL1 (226 aa).

Belongs to the universal ribosomal protein uL1 family. As to quaternary structure, part of the 50S ribosomal subunit.

Binds directly to 23S rRNA. The L1 stalk is quite mobile in the ribosome, and is involved in E site tRNA release. In terms of biological role, protein L1 is also a translational repressor protein, it controls the translation of the L11 operon by binding to its mRNA. In Mycoplasma capricolum subsp. capricolum (strain California kid / ATCC 27343 / NCTC 10154), this protein is Large ribosomal subunit protein uL1.